A 514-amino-acid chain; its full sequence is Putative binding protein HI_0213 (514 aa).

The first 23 residues, 1-23 (MNNLFALCQRSAVIFSIIFTVVA), serve as a signal peptide directing secretion. The N-palmitoyl cysteine moiety is linked to residue Cys-24. A lipid anchor (S-diacylglycerol cysteine) is attached at Cys-24.

The protein belongs to the bacterial solute-binding protein 5 family.

Its subcellular location is the cell membrane. In terms of biological role, part of a binding-protein-dependent transport system. The chain is Putative binding protein HI_0213 from Haemophilus influenzae (strain ATCC 51907 / DSM 11121 / KW20 / Rd).